We begin with the raw amino-acid sequence, 368 residues long: Peptide chain release factor 2 (368 aa).

N5-methylglutamine is present on glutamine 250.

It belongs to the prokaryotic/mitochondrial release factor family. Post-translationally, methylated by PrmC. Methylation increases the termination efficiency of RF2.

It is found in the cytoplasm. In terms of biological role, peptide chain release factor 2 directs the termination of translation in response to the peptide chain termination codons UGA and UAA. This chain is Peptide chain release factor 2, found in Chlamydia trachomatis serovar L2 (strain ATCC VR-902B / DSM 19102 / 434/Bu).